Reading from the N-terminus, the 208-residue chain is Probable nicotinate-nucleotide adenylyltransferase (208 aa).

It belongs to the NadD family.

It catalyses the reaction nicotinate beta-D-ribonucleotide + ATP + H(+) = deamido-NAD(+) + diphosphate. Its pathway is cofactor biosynthesis; NAD(+) biosynthesis; deamido-NAD(+) from nicotinate D-ribonucleotide: step 1/1. Its function is as follows. Catalyzes the reversible adenylation of nicotinate mononucleotide (NaMN) to nicotinic acid adenine dinucleotide (NaAD). In Trichormus variabilis (strain ATCC 29413 / PCC 7937) (Anabaena variabilis), this protein is Probable nicotinate-nucleotide adenylyltransferase.